A 358-amino-acid polypeptide reads, in one-letter code: Protein Wnt-8 (358 aa).

A signal peptide spans 1–22; the sequence is MQNTTLFILATLLIFCPFFTAS. A disulfide bond links Cys-55 and Cys-66. N-linked (GlcNAc...) asparagine glycosylation occurs at Asn-104. 10 disulfide bridges follow: Cys-105-Cys-113, Cys-115-Cys-133, Cys-181-Cys-195, Cys-183-Cys-190, Cys-260-Cys-298, Cys-276-Cys-291, Cys-295-Cys-337, Cys-313-Cys-328, Cys-315-Cys-325, and Cys-320-Cys-321. Ser-187 is lipidated: O-palmitoleoyl serine. Residues Asn-263 and Asn-282 are each glycosylated (N-linked (GlcNAc...) asparagine).

This sequence belongs to the Wnt family. As to quaternary structure, homooligomer; disulfide-linked, leading to inactivation. Interacts with the long chain of cer1. Post-translationally, palmitoleoylation is required for efficient binding to frizzled receptors. Depalmitoleoylation leads to Wnt signaling pathway inhibition. Proteolytic processing by tiki1 and tiki2 promotes oxidation and formation of large disulfide-bond oligomers, leading to inactivation of wnt8.

The protein resides in the secreted. The protein localises to the extracellular space. It is found in the extracellular matrix. Functionally, ligand for members of the frizzled family of seven transmembrane receptors. Plays a role in ventral mesodermal patterning during embryogenesis. Mimics Nieuwkoop center activity. Causes dorsal mesodermal differentiation of animal cap ectoderm when coexpressed with noggin and nuclear, sequence-specific DNA-binding protein xBra. None of these molecules causes dorsal mesoderm formation when expressed alone. The chain is Protein Wnt-8 (wnt8) from Xenopus laevis (African clawed frog).